Here is a 258-residue protein sequence, read N- to C-terminus: Ubiquinone/menaquinone biosynthesis C-methyltransferase UbiE (258 aa).

S-adenosyl-L-methionine-binding positions include T83, D104, and 130–131 (DA).

This sequence belongs to the class I-like SAM-binding methyltransferase superfamily. MenG/UbiE family.

The enzyme catalyses a 2-demethylmenaquinol + S-adenosyl-L-methionine = a menaquinol + S-adenosyl-L-homocysteine + H(+). It catalyses the reaction a 2-methoxy-6-(all-trans-polyprenyl)benzene-1,4-diol + S-adenosyl-L-methionine = a 5-methoxy-2-methyl-3-(all-trans-polyprenyl)benzene-1,4-diol + S-adenosyl-L-homocysteine + H(+). The protein operates within quinol/quinone metabolism; menaquinone biosynthesis; menaquinol from 1,4-dihydroxy-2-naphthoate: step 2/2. It functions in the pathway cofactor biosynthesis; ubiquinone biosynthesis. Functionally, methyltransferase required for the conversion of demethylmenaquinol (DMKH2) to menaquinol (MKH2) and the conversion of 2-polyprenyl-6-methoxy-1,4-benzoquinol (DDMQH2) to 2-polyprenyl-3-methyl-6-methoxy-1,4-benzoquinol (DMQH2). The sequence is that of Ubiquinone/menaquinone biosynthesis C-methyltransferase UbiE from Bordetella bronchiseptica (strain ATCC BAA-588 / NCTC 13252 / RB50) (Alcaligenes bronchisepticus).